The primary structure comprises 545 residues: MTPGELRRLYLIIRVFLSYGLDELIPRIRLTWPLRFGRYLLFWIPNRHKDKSLGERLRLALQELGPVWIKFGQMLSTRRDLFPPAIADQLALLQDRVASFDGALARQYIETALGGALETWFDDFEPIALASASIAQVHTARLKENGQEIVIKVIRPDILPIIKADIRLMYRLANWVPMLLPDGRRLRPREVVREYEKTLIDELNLLREAANAIQLRRNFENSSTLYVPEIYSDYCRENVLVMERVYGIPVSDIEALEAQNTNMRLLAERGVQVFFTQVFRDSFFHADMHPGNIFVSYEHPEDPFYIGIDYGIVGSLNKDDKRYLAENFIAFFNRDYRKVAELHVDSGWVPSDTNVEDFEFAIRTVCEPIFEKPLAEISFGHVLLNLFNTARRFNMAVQPQLVLLQKTLLYVEGLGRQLYPQLDLWKTAKPFLEEWLHSQVGLPAVIRALKEKVPYWAEKLPELPELVYDSLQQHKHLQVSIEKLSGHLRGQQIKQRQSQYLLGVGATLFLCGSLFLLSGLANIPWLFIGAGTVSWLFGWCRLCKI.

Residues 123-501 (DFEPIALASA…QIKQRQSQYL (379 aa)) form the Protein kinase domain. Residues 129–137 (LASASIAQV) and Lys152 contribute to the ATP site. Asp287 (proton acceptor) is an active-site residue. The chain crosses the membrane as a helical span at residues 508–528 (LFLCGSLFLLSGLANIPWLFI).

This sequence belongs to the ABC1 family. UbiB subfamily.

The protein localises to the cell inner membrane. The protein operates within cofactor biosynthesis; ubiquinone biosynthesis [regulation]. Is probably a protein kinase regulator of UbiI activity which is involved in aerobic coenzyme Q (ubiquinone) biosynthesis. This chain is Probable protein kinase UbiB, found in Photorhabdus laumondii subsp. laumondii (strain DSM 15139 / CIP 105565 / TT01) (Photorhabdus luminescens subsp. laumondii).